We begin with the raw amino-acid sequence, 104 residues long: Large ribosomal subunit protein uL24 (104 aa).

Belongs to the universal ribosomal protein uL24 family. As to quaternary structure, part of the 50S ribosomal subunit.

Functionally, one of two assembly initiator proteins, it binds directly to the 5'-end of the 23S rRNA, where it nucleates assembly of the 50S subunit. In terms of biological role, one of the proteins that surrounds the polypeptide exit tunnel on the outside of the subunit. This chain is Large ribosomal subunit protein uL24, found in Shewanella woodyi (strain ATCC 51908 / MS32).